Reading from the N-terminus, the 163-residue chain is Nucleotide-binding protein tll0793 (163 aa).

The protein belongs to the YajQ family.

In terms of biological role, nucleotide-binding protein. The protein is Nucleotide-binding protein tll0793 of Thermosynechococcus vestitus (strain NIES-2133 / IAM M-273 / BP-1).